Here is a 1024-residue protein sequence, read N- to C-terminus: Beta-galactosidase (1024 aa).

The substrate site is built by Asn-103 and Asp-202. A Na(+)-binding site is contributed by Asp-202. Mg(2+) contacts are provided by Glu-417, His-419, and Glu-462. Residues Glu-462 and 538 to 541 contribute to the substrate site; that span reads EYAH. Glu-462 functions as the Proton donor in the catalytic mechanism. The Nucleophile role is filled by Glu-538. Residue Asn-598 participates in Mg(2+) binding. The Na(+) site is built by Phe-602 and Asn-605. Positions 605 and 1000 each coordinate substrate.

The protein belongs to the glycosyl hydrolase 2 family. In terms of assembly, homotetramer. It depends on Mg(2+) as a cofactor. Na(+) serves as cofactor.

The enzyme catalyses Hydrolysis of terminal non-reducing beta-D-galactose residues in beta-D-galactosides.. The polypeptide is Beta-galactosidase (Escherichia coli O157:H7).